Here is a 1060-residue protein sequence, read N- to C-terminus: Positive regulator of purine utilization (1060 aa).

Over residues 1–15 (MLNPSTSDIHTSPTA) the composition is skewed to polar residues. The segment at 1–48 (MLNPSTSDIHTSPTAVGNGRKRPHPIADSGSAMPSDPSAQQLPHPANE) is disordered. The segment at residues 67–94 (CNRCRQRKNRCDQRLPRCQACEKAGVRC) is a DNA-binding region (zn(2)-C6 fungal-type). Disordered stretches follow at residues 163–207 (EIAA…DAED), 251–282 (SVPG…TTRD), 367–391 (AEDQ…SRQY), 811–862 (VQTS…RFDM), and 877–969 (RQGS…PSGM). Composition is skewed to basic and acidic residues over residues 170–182 (SNDK…KEKN), 189–207 (KASR…DAED), and 260–269 (GPSRPKERLP). Polar residues predominate over residues 272 to 282 (ATGTEGSTTRD). Residues 367 to 377 (AEDQKEGRDHS) show a composition bias toward basic and acidic residues. Residues 811–831 (VQTSTSGSRQFNATQSRSRPY) are compositionally biased toward polar residues. Composition is skewed to low complexity over residues 832–859 (SRQQ…PLPR) and 930–952 (PRYY…AASG).

The protein localises to the nucleus. Its function is as follows. Mediates the induction of a number of unlinked genes involved in purine utilization. Binds to the consensus sequence 5'-TCGGNNNNNNCCGA-3'. The polypeptide is Positive regulator of purine utilization (uaY) (Emericella nidulans (strain FGSC A4 / ATCC 38163 / CBS 112.46 / NRRL 194 / M139) (Aspergillus nidulans)).